The chain runs to 329 residues: MAP kinase-activated protein kinase 2 (329 aa).

Residues 1–7 (LGINGKV) and Lys22 each bind ATP. The Protein kinase domain maps to 1-254 (LGINGKVLRI…ITEFMNHPWI (254 aa)). Residue 68–70 (ECL) participates in staurosporine binding. The active-site Proton acceptor is Asp115. Thr151 is subject to Phosphothreonine; by MAPK14. Ser201 bears the Phosphoserine; by MAPK14 mark. Ser257 is subject to Phosphoserine; by autocatalysis. The segment at 257-293 (STKVPQTPLHTSRVLKEDKERWEDVKEEMTSALATMR) is autoinhibitory helix. Position 263 is a phosphothreonine; by MAPK14 (Thr263). A Glycyl lysine isopeptide (Lys-Gly) (interchain with G-Cter in SUMO) cross-link involves residue Lys282. Residues 285 to 294 (MTSALATMRV) carry the Nuclear export signal (NES) motif. The interval 295 to 319 (DYEQIKIKKIEDASNPLLLKRRKKA) is p38 MAPK-binding site. 2 short sequence motifs (bipartite nuclear localization signal) span residues 300–303 (KIKK) and 314–318 (KRRKK).

The protein belongs to the protein kinase superfamily. CAMK Ser/Thr protein kinase family. Heterodimer with p38-alpha/MAPK14; this heterodimer forms a stable complex: molecules are positioned 'face to face' so that the ATP-binding sites of both kinases are at the heterodimer interface. Interacts with PHC2. Interacts with HSF1. Sumoylation inhibits the protein kinase activity. In terms of processing, phosphorylated and activated by MAP kinase p38-alpha/MAPK14 at Thr-151, Ser-201 and Thr-263.

The protein resides in the cytoplasm. It localises to the nucleus. It carries out the reaction L-seryl-[protein] + ATP = O-phospho-L-seryl-[protein] + ADP + H(+). It catalyses the reaction L-threonyl-[protein] + ATP = O-phospho-L-threonyl-[protein] + ADP + H(+). With respect to regulation, activated following phosphorylation by p38-alpha/MAPK14 following various stresses. Inhibited following sumoylation. Specifically inhibited by pyrrolopyridine inhibitors. Functionally, stress-activated serine/threonine-protein kinase involved in cytokine production, endocytosis, reorganization of the cytoskeleton, cell migration, cell cycle control, chromatin remodeling, DNA damage response and transcriptional regulation. Following stress, it is phosphorylated and activated by MAP kinase p38-alpha/MAPK14, leading to phosphorylation of substrates. Phosphorylates serine in the peptide sequence, Hyd-X-R-X(2)-S, where Hyd is a large hydrophobic residue. Phosphorylates ALOX5, CDC25B, CDC25C, CEP131, ELAVL1, HNRNPA0, HSP27/HSPB1, KRT18, KRT20, LIMK1, LSP1, PABPC1, PARN, PDE4A, RCSD1, RPS6KA3, TAB3 and TTP/ZFP36. Phosphorylates HSF1; leading to the interaction with HSP90 proteins and inhibiting HSF1 homotrimerization, DNA-binding and transactivation activities. Mediates phosphorylation of HSP27/HSPB1 in response to stress, leading to the dissociation of HSP27/HSPB1 from large small heat-shock protein (sHsps) oligomers and impairment of their chaperone activities and ability to protect against oxidative stress effectively. Involved in inflammatory response by regulating tumor necrosis factor (TNF) and IL6 production post-transcriptionally: acts by phosphorylating AU-rich elements (AREs)-binding proteins ELAVL1, HNRNPA0, PABPC1 and TTP/ZFP36, leading to regulation of the stability and translation of TNF and IL6 mRNAs. Phosphorylation of TTP/ZFP36, a major post-transcriptional regulator of TNF, promotes its binding to 14-3-3 proteins and reduces its ARE mRNA affinity, leading to inhibition of dependent degradation of ARE-containing transcripts. Phosphorylates CEP131 in response to cellular stress following ultraviolet irradiation which promotes binding of CEP131 to 14-3-3 proteins and inhibits formation of novel centriolar satellites. Also involved in late G2/M checkpoint following DNA damage through a process of post-transcriptional mRNA stabilization: following DNA damage, relocalizes from nucleus to cytoplasm and phosphorylates HNRNPA0 and PARN, leading to stabilization of GADD45A mRNA. Involved in toll-like receptor signaling pathway (TLR) in dendritic cells: required for acute TLR-induced macropinocytosis by phosphorylating and activating RPS6KA3. This chain is MAP kinase-activated protein kinase 2 (MAPKAPK2), found in Cricetulus longicaudatus (Long-tailed dwarf hamster).